The chain runs to 566 residues: Putative sulfite reductase [NADPH] hemoprotein beta-component (566 aa).

[4Fe-4S] cluster-binding residues include Cys-430, Cys-436, Cys-475, and Cys-479. Cys-479 lines the siroheme pocket.

It belongs to the nitrite and sulfite reductase 4Fe-4S domain family. Alpha(8)-beta(8). The alpha component is a flavoprotein, the beta component is a hemoprotein. Requires siroheme as cofactor. [4Fe-4S] cluster is required as a cofactor.

It carries out the reaction hydrogen sulfide + 3 NADP(+) + 3 H2O = sulfite + 3 NADPH + 4 H(+). It functions in the pathway sulfur metabolism; hydrogen sulfide biosynthesis; hydrogen sulfide from sulfite (NADPH route): step 1/1. Functionally, component of the sulfite reductase complex that catalyzes the 6-electron reduction of sulfite to sulfide. This is one of several activities required for the biosynthesis of L-cysteine from sulfate. This chain is Putative sulfite reductase [NADPH] hemoprotein beta-component, found in Buchnera aphidicola subsp. Schizaphis graminum (strain Sg).